Reading from the N-terminus, the 354-residue chain is uncharacterized protein (354 aa).

The segment covering 309–326 (VNSANSINTANTRSQTGG) has biased composition (polar residues). Residues 309 to 333 (VNSANSINTANTRSQTGGQDEEDFE) are disordered. A coiled-coil region spans residues 326–353 (GQDEEDFEKKYKKYKNKYAKLKNQKTSN).

It localises to the virion. This is an uncharacterized protein from Acanthamoeba polyphaga (Amoeba).